The sequence spans 206 residues: Large ribosomal subunit protein uL4 (206 aa).

Positions 63–94 (MYKQKGTGRARHHSARAPQFRGGGKAHGPVVR) are disordered. The segment covering 64–77 (YKQKGTGRARHHSA) has biased composition (basic residues).

Belongs to the universal ribosomal protein uL4 family. As to quaternary structure, part of the 50S ribosomal subunit.

One of the primary rRNA binding proteins, this protein initially binds near the 5'-end of the 23S rRNA. It is important during the early stages of 50S assembly. It makes multiple contacts with different domains of the 23S rRNA in the assembled 50S subunit and ribosome. In terms of biological role, forms part of the polypeptide exit tunnel. The chain is Large ribosomal subunit protein uL4 from Mesorhizobium japonicum (strain LMG 29417 / CECT 9101 / MAFF 303099) (Mesorhizobium loti (strain MAFF 303099)).